We begin with the raw amino-acid sequence, 334 residues long: Transaldolase (334 aa).

Serine 2 is modified (N-acetylserine). Residue lysine 143 is the Schiff-base intermediate with substrate of the active site.

The protein belongs to the transaldolase family. Type 1 subfamily. As to quaternary structure, homodimer.

The catalysed reaction is D-sedoheptulose 7-phosphate + D-glyceraldehyde 3-phosphate = D-erythrose 4-phosphate + beta-D-fructose 6-phosphate. It functions in the pathway carbohydrate degradation; pentose phosphate pathway; D-glyceraldehyde 3-phosphate and beta-D-fructose 6-phosphate from D-ribose 5-phosphate and D-xylulose 5-phosphate (non-oxidative stage): step 2/3. Transaldolase is important for the balance of metabolites in the pentose-phosphate pathway. The protein is Transaldolase (TAL1) of Kluyveromyces lactis (strain ATCC 8585 / CBS 2359 / DSM 70799 / NBRC 1267 / NRRL Y-1140 / WM37) (Yeast).